A 341-amino-acid chain; its full sequence is Methionine import ATP-binding protein MetN 1 (341 aa).

The ABC transporter domain maps to 2–241 (IEFKNVNKVF…PQTNTAKNFV (240 aa)). An ATP-binding site is contributed by 38–45 (GYSGAGKS).

The protein belongs to the ABC transporter superfamily. Methionine importer (TC 3.A.1.24) family. As to quaternary structure, the complex is composed of two ATP-binding proteins (MetN), two transmembrane proteins (MetI) and a solute-binding protein (MetQ).

Its subcellular location is the cell membrane. It catalyses the reaction L-methionine(out) + ATP + H2O = L-methionine(in) + ADP + phosphate + H(+). It carries out the reaction D-methionine(out) + ATP + H2O = D-methionine(in) + ADP + phosphate + H(+). Functionally, part of the ABC transporter complex MetNIQ involved in methionine import. Responsible for energy coupling to the transport system. This chain is Methionine import ATP-binding protein MetN 1, found in Staphylococcus epidermidis (strain ATCC 35984 / DSM 28319 / BCRC 17069 / CCUG 31568 / BM 3577 / RP62A).